A 137-amino-acid chain; its full sequence is Large ribosomal subunit protein uL16 (137 aa).

This sequence belongs to the universal ribosomal protein uL16 family. As to quaternary structure, part of the 50S ribosomal subunit.

Binds 23S rRNA and is also seen to make contacts with the A and possibly P site tRNAs. In Leuconostoc mesenteroides subsp. mesenteroides (strain ATCC 8293 / DSM 20343 / BCRC 11652 / CCM 1803 / JCM 6124 / NCDO 523 / NBRC 100496 / NCIMB 8023 / NCTC 12954 / NRRL B-1118 / 37Y), this protein is Large ribosomal subunit protein uL16.